Consider the following 290-residue polypeptide: MRLSIKAPAKINLSLDVLYKRPDGYHEVKMVMTTIDLADRIELVALPEEDAIRIVSQNRFVPDDCRNLAYQAAKLLKETFSIRQGVAISITKHIPVAAGLAGGSSNAAATLRGLNKLWQLGLTLDELAELGAKIGSDVAFCVYGGTALATGRGEIITPIPSPPPCWVVLAKPPIGVSTAEVYRNLELERVSHPDVDAMVRAIERQDYAAICRLVGNVLEEVTLKKYPEVAHIKEQMKRFGADAVLMSGSGPTVFGLIEHDSRMQRVYNGLRGFCDQVFAVRMLGERHSLD.

The active site involves K10. Position 95–105 (95–105 (PVAAGLAGGSS)) interacts with ATP. D137 is an active-site residue.

Belongs to the GHMP kinase family. IspE subfamily.

The enzyme catalyses 4-CDP-2-C-methyl-D-erythritol + ATP = 4-CDP-2-C-methyl-D-erythritol 2-phosphate + ADP + H(+). Its pathway is isoprenoid biosynthesis; isopentenyl diphosphate biosynthesis via DXP pathway; isopentenyl diphosphate from 1-deoxy-D-xylulose 5-phosphate: step 3/6. Catalyzes the phosphorylation of the position 2 hydroxy group of 4-diphosphocytidyl-2C-methyl-D-erythritol. In Geobacillus kaustophilus (strain HTA426), this protein is 4-diphosphocytidyl-2-C-methyl-D-erythritol kinase.